A 149-amino-acid chain; its full sequence is Deoxyuridine 5'-triphosphate nucleotidohydrolase (149 aa).

Residues 68-70, Asn81, 85-87, and Met95 each bind substrate; these read RSG and LID.

Belongs to the dUTPase family. It depends on Mg(2+) as a cofactor.

The catalysed reaction is dUTP + H2O = dUMP + diphosphate + H(+). It functions in the pathway pyrimidine metabolism; dUMP biosynthesis; dUMP from dCTP (dUTP route): step 2/2. This enzyme is involved in nucleotide metabolism: it produces dUMP, the immediate precursor of thymidine nucleotides and it decreases the intracellular concentration of dUTP so that uracil cannot be incorporated into DNA. The chain is Deoxyuridine 5'-triphosphate nucleotidohydrolase from Polynucleobacter necessarius subsp. necessarius (strain STIR1).